Reading from the N-terminus, the 663-residue chain is DNA ligase (663 aa).

NAD(+) is bound by residues 33-37 (DQEFD), 82-83 (SL), and Glu-113. Lys-115 functions as the N6-AMP-lysine intermediate in the catalytic mechanism. Residues Arg-136, Glu-170, Lys-286, and Lys-310 each contribute to the NAD(+) site. Zn(2+) is bound by residues Cys-404, Cys-407, Cys-422, and Cys-427. In terms of domain architecture, BRCT spans 587-663 (SSDPSLTGKL…IEESDLEDFL (77 aa)).

Belongs to the NAD-dependent DNA ligase family. LigA subfamily. Mg(2+) serves as cofactor. It depends on Mn(2+) as a cofactor.

The enzyme catalyses NAD(+) + (deoxyribonucleotide)n-3'-hydroxyl + 5'-phospho-(deoxyribonucleotide)m = (deoxyribonucleotide)n+m + AMP + beta-nicotinamide D-nucleotide.. Functionally, DNA ligase that catalyzes the formation of phosphodiester linkages between 5'-phosphoryl and 3'-hydroxyl groups in double-stranded DNA using NAD as a coenzyme and as the energy source for the reaction. It is essential for DNA replication and repair of damaged DNA. The chain is DNA ligase from Natranaerobius thermophilus (strain ATCC BAA-1301 / DSM 18059 / JW/NM-WN-LF).